The sequence spans 269 residues: 4-hydroxy-tetrahydrodipicolinate reductase (269 aa).

NAD(+) is bound by residues 10–15 (GANGRM), glutamate 36, 99–101 (GTT), and 123–126 (AANF). Histidine 156 acts as the Proton donor/acceptor in catalysis. Histidine 157 is a (S)-2,3,4,5-tetrahydrodipicolinate binding site. Lysine 160 acts as the Proton donor in catalysis. A (S)-2,3,4,5-tetrahydrodipicolinate-binding site is contributed by 166 to 167 (GT).

Belongs to the DapB family.

It localises to the cytoplasm. The catalysed reaction is (S)-2,3,4,5-tetrahydrodipicolinate + NAD(+) + H2O = (2S,4S)-4-hydroxy-2,3,4,5-tetrahydrodipicolinate + NADH + H(+). It catalyses the reaction (S)-2,3,4,5-tetrahydrodipicolinate + NADP(+) + H2O = (2S,4S)-4-hydroxy-2,3,4,5-tetrahydrodipicolinate + NADPH + H(+). The protein operates within amino-acid biosynthesis; L-lysine biosynthesis via DAP pathway; (S)-tetrahydrodipicolinate from L-aspartate: step 4/4. Functionally, catalyzes the conversion of 4-hydroxy-tetrahydrodipicolinate (HTPA) to tetrahydrodipicolinate. The polypeptide is 4-hydroxy-tetrahydrodipicolinate reductase (Neisseria meningitidis serogroup B (strain ATCC BAA-335 / MC58)).